Here is a 294-residue protein sequence, read N- to C-terminus: ADP-ribosyl-[dinitrogen reductase] glycohydrolase (294 aa).

Residues 100–102 (NTC), glutamate 121, histidine 158, and tyrosine 212 contribute to the ADP-D-ribose site. 3 residues coordinate Mn(2+): aspartate 243, aspartate 245, and threonine 246.

It belongs to the ADP-ribosylglycohydrolase family. Monomer. Mn(2+) is required as a cofactor.

It is found in the cytoplasm. The enzyme catalyses N(omega)-alpha-(ADP-D-ribosyl)-L-arginyl-[dinitrogen reductase] + H2O = L-arginyl-[dinitrogen reductase] + ADP-D-ribose. Functionally, involved in the regulation of nitrogen fixation activity by the reversible ADP-ribosylation of one subunit of the homodimeric dinitrogenase reductase component of the nitrogenase enzyme complex. The ADP-ribosyltransferase (DraT) transfers the ADP-ribose group from NAD to dinitrogenase reductase. The ADP-ribose group is removed through the action of the ADP-ribosylglycohydrolase (DraG, this entry). The protein is ADP-ribosyl-[dinitrogen reductase] glycohydrolase of Rhodospirillum rubrum.